A 66-amino-acid chain; its full sequence is Potassium channel toxin alpha-KTx 27.3 (66 aa).

The N-terminal stretch at 1 to 17 (MKLMWLLFLCVLAFSIA) is a signal peptide.

This sequence belongs to the short scorpion toxin superfamily. Potassium channel inhibitor family. Alpha-KTx 27 subfamily. Contains 4 disulfide bonds. Expressed by the venom gland.

It localises to the secreted. This Lychas mucronatus (Chinese swimming scorpion) protein is Potassium channel toxin alpha-KTx 27.3.